Here is a 116-residue protein sequence, read N- to C-terminus: MSWRGRSTYRPRPRRYVEPPEMIGPMLPEQFSDEVEPATPEEGEPATQRQDPAAAQEGEDEGASAGQGPKPEADSQEQVHPKTGCECGDGPDGQEMGLPNPEEVKRPEEGEKQSQC.

Positions 1-116 (MSWRGRSTYR…PEEGEKQSQC (116 aa)) are disordered. Acidic residues predominate over residues 31–44 (FSDEVEPATPEEGE). Basic and acidic residues-rich tracts occupy residues 71-80 (PEADSQEQVH) and 102-116 (EEVKRPEEGEKQSQC).

The protein belongs to the GAGE family.

This is G antigen 10 (GAGE10) from Homo sapiens (Human).